A 143-amino-acid chain; its full sequence is Large ribosomal subunit protein uL11 (143 aa).

The protein belongs to the universal ribosomal protein uL11 family. As to quaternary structure, part of the ribosomal stalk of the 50S ribosomal subunit. Interacts with L10 and the large rRNA to form the base of the stalk. L10 forms an elongated spine to which L12 dimers bind in a sequential fashion forming a multimeric L10(L12)X complex. Post-translationally, one or more lysine residues are methylated.

Functionally, forms part of the ribosomal stalk which helps the ribosome interact with GTP-bound translation factors. This is Large ribosomal subunit protein uL11 from Cupriavidus metallidurans (strain ATCC 43123 / DSM 2839 / NBRC 102507 / CH34) (Ralstonia metallidurans).